The primary structure comprises 91 residues: Non-specific lipid-transfer protein 1 (91 aa).

4 disulfides stabilise this stretch: cysteine 3/cysteine 50, cysteine 13/cysteine 27, cysteine 28/cysteine 73, and cysteine 48/cysteine 87.

Belongs to the plant LTP family.

In terms of biological role, plant non-specific lipid-transfer proteins transfer phospholipids as well as galactolipids across membranes. May play a role in wax or cutin deposition in the cell walls of expanding epidermal cells and certain secretory tissues. This is Non-specific lipid-transfer protein 1 from Morus nigra (Black mulberry).